The primary structure comprises 184 residues: MNRTAYTVGALLLLLGTLLPAAEGKKKGSQGAIPPPDKAQHNDSEQTQSPPQPGSRTRGRGQGRGTAMPGEEVLESSQEALHVTERKYLKRDWCKTQPLKQTIHEEGCNSRTIINRFCYGQCNSFYIPRHIRKEEGSFQSCSFCKPKKFTTMMVTLNCPELQPPTKKKRVTRVKQCRCISIDLD.

Positions methionine 1–glycine 24 are cleaved as a signal peptide. Residues asparagine 2 and asparagine 42 are each glycosylated (N-linked (GlcNAc...) asparagine). Residues glycine 24–glutamine 78 form a disordered region. Disulfide bonds link cysteine 94-cysteine 144, cysteine 108-cysteine 158, cysteine 118-cysteine 176, and cysteine 122-cysteine 178. The region spanning cysteine 94 to aspartate 184 is the CTCK domain.

The protein belongs to the DAN family. As to quaternary structure, homodimer; can also form homooligomers. Interacts with BMP2; can form higher oligomers with BMP2. Interacts with SLIT1 and SLIT2 in a glycosylation-dependent manner. In terms of tissue distribution, highly expressed in the brain, kidney, spleen, and testis and weakly expressed in the lung and liver. Predominantly expressed in differentiated cells as neurons in brain, type I cells in lung and globlet cells in intestine.

It is found in the secreted. Cytokine that may play an important role during carcinogenesis and metanephric kidney organogenesis, as a BMP antagonist required for early limb outgrowth and patterning in maintaining the FGF4-SHH feedback loop. Down-regulates the BMP4 signaling in a dose-dependent manner. Antagonist of BMP2; inhibits BMP2-mediated differentiation of osteoblasts (in vitro). Acts as inhibitor of monocyte chemotaxis. Can inhibit the growth or viability of normal cells but not transformed cells when is overexpressed. In Rattus norvegicus (Rat), this protein is Gremlin-1 (Grem1).